Reading from the N-terminus, the 115-residue chain is Photosystem II reaction center Psb28 protein (115 aa).

Belongs to the Psb28 family. Part of the photosystem II complex.

Its subcellular location is the plastid. The protein resides in the chloroplast thylakoid membrane. The protein is Photosystem II reaction center Psb28 protein of Phaeodactylum tricornutum (strain CCAP 1055/1).